Here is a 380-residue protein sequence, read N- to C-terminus: 1-deoxy-D-xylulose 5-phosphate reductoisomerase (380 aa).

8 residues coordinate NADPH: T10, G11, S12, I13, G36, R37, N38, and N120. K121 serves as a coordination point for 1-deoxy-D-xylulose 5-phosphate. E122 serves as a coordination point for NADPH. Mn(2+) is bound at residue D146. 1-deoxy-D-xylulose 5-phosphate contacts are provided by S147, E148, S172, and H195. E148 provides a ligand contact to Mn(2+). G201 is a binding site for NADPH. 4 residues coordinate 1-deoxy-D-xylulose 5-phosphate: S208, N213, K214, and E217. E217 serves as a coordination point for Mn(2+).

The protein belongs to the DXR family. Requires Mg(2+) as cofactor. It depends on Mn(2+) as a cofactor.

The enzyme catalyses 2-C-methyl-D-erythritol 4-phosphate + NADP(+) = 1-deoxy-D-xylulose 5-phosphate + NADPH + H(+). Its pathway is isoprenoid biosynthesis; isopentenyl diphosphate biosynthesis via DXP pathway; isopentenyl diphosphate from 1-deoxy-D-xylulose 5-phosphate: step 1/6. Catalyzes the NADPH-dependent rearrangement and reduction of 1-deoxy-D-xylulose-5-phosphate (DXP) to 2-C-methyl-D-erythritol 4-phosphate (MEP). In Listeria monocytogenes serotype 4a (strain HCC23), this protein is 1-deoxy-D-xylulose 5-phosphate reductoisomerase.